Reading from the N-terminus, the 265-residue chain is Hydroxyethylthiazole kinase (265 aa).

Met55 lines the substrate pocket. Residues Arg130 and Ser176 each coordinate ATP. Gly203 lines the substrate pocket.

It belongs to the Thz kinase family. It depends on Mg(2+) as a cofactor.

It catalyses the reaction 5-(2-hydroxyethyl)-4-methylthiazole + ATP = 4-methyl-5-(2-phosphooxyethyl)-thiazole + ADP + H(+). Its pathway is cofactor biosynthesis; thiamine diphosphate biosynthesis; 4-methyl-5-(2-phosphoethyl)-thiazole from 5-(2-hydroxyethyl)-4-methylthiazole: step 1/1. In terms of biological role, catalyzes the phosphorylation of the hydroxyl group of 4-methyl-5-beta-hydroxyethylthiazole (THZ). This is Hydroxyethylthiazole kinase from Leptospira interrogans serogroup Icterohaemorrhagiae serovar copenhageni (strain Fiocruz L1-130).